The primary structure comprises 470 residues: AAA-ATPase At5g17730 (470 aa).

The N-terminal stretch at 1 to 18 (MFSLRNLPSLAPFVSAYA) is a signal peptide. ATP is bound at residue 252 to 259 (GPPGTGKT).

It belongs to the AAA ATPase family. BCS1 subfamily. Requires Mg(2+) as cofactor.

The enzyme catalyses ATP + H2O = ADP + phosphate + H(+). This Arabidopsis thaliana (Mouse-ear cress) protein is AAA-ATPase At5g17730.